The sequence spans 126 residues: Fluoride-specific ion channel FluC (126 aa).

The next 4 membrane-spanning stretches (helical) occupy residues 3–23 (MILA…LTGV), 39–59 (TVNV…AHVW), 71–91 (VGVL…ALLV), and 101–121 (AYVA…LALI). Positions 75 and 78 each coordinate Na(+).

This sequence belongs to the fluoride channel Fluc/FEX (TC 1.A.43) family.

The protein resides in the cell inner membrane. The enzyme catalyses fluoride(in) = fluoride(out). Its activity is regulated as follows. Na(+) is not transported, but it plays an essential structural role and its presence is essential for fluoride channel function. In terms of biological role, fluoride-specific ion channel. Important for reducing fluoride concentration in the cell, thus reducing its toxicity. This is Fluoride-specific ion channel FluC from Rhodospirillum centenum (strain ATCC 51521 / SW).